A 185-amino-acid polypeptide reads, in one-letter code: Ribosome-recycling factor (185 aa).

It belongs to the RRF family.

The protein localises to the cytoplasm. Its function is as follows. Responsible for the release of ribosomes from messenger RNA at the termination of protein biosynthesis. May increase the efficiency of translation by recycling ribosomes from one round of translation to another. This Thermotoga petrophila (strain ATCC BAA-488 / DSM 13995 / JCM 10881 / RKU-1) protein is Ribosome-recycling factor.